A 914-amino-acid polypeptide reads, in one-letter code: UPF0182 protein Syncc9605_1323 (914 aa).

9 helical membrane passes run 4–24 (LLLLLPLVVVAARMQIEWLWF), 37–57 (WLLQVLLAGVAMLPLLAARAW), 81–101 (IALLICAVVVLISALLTLDLL), 123–143 (RIGSVVKLVQVGGIGLAMTWL), 152–172 (IVAASWVVVVSRTWGIWSLAL), 195–215 (FAGLHLALDLLLLGATFTLVF), 240–260 (MRLIRLLSALLLFGAAGLVWL), 285–305 (LPLRGFATLLLLLMGLALLLP), and 312–332 (QFLALALATLVMLETLATPLT).

Belongs to the UPF0182 family.

The protein localises to the cell membrane. The protein is UPF0182 protein Syncc9605_1323 of Synechococcus sp. (strain CC9605).